We begin with the raw amino-acid sequence, 519 residues long: UvrABC system protein C (519 aa).

The GIY-YIG domain occupies 9–87; the sequence is HLPGCYLFKN…IKKHWPRYNI (79 aa). The UVR domain maps to 191 to 226; that stretch reads RELIESMEKDMRELASRQQFEQAMALRDEIAALEYL.

This sequence belongs to the UvrC family. As to quaternary structure, interacts with UvrB in an incision complex.

It is found in the cytoplasm. Its function is as follows. The UvrABC repair system catalyzes the recognition and processing of DNA lesions. UvrC both incises the 5' and 3' sides of the lesion. The N-terminal half is responsible for the 3' incision and the C-terminal half is responsible for the 5' incision. The protein is UvrABC system protein C of Methanosarcina barkeri (strain Fusaro / DSM 804).